Consider the following 1143-residue polypeptide: Disease resistance protein Pik-1 (1143 aa).

The structured coiled coil (CC) domain stretch occupies residues 1 to 190; sequence MEAAAMAVTA…PLRIMGGEMQ (190 aa). The region spanning 189-258 is the HMA domain; sequence MQKIVFKIPM…KVGHAELLQV (70 aa). Positions 191-264 are HMA-like domain; that stretch reads KIVFKIPMVD…LLQVSQVKED (74 aa). The region spanning 282 to 570 is the NB-ARC domain; sequence HEVKTICILG…WIAEGFVSEE (289 aa). 10 LRR repeats span residues 681–706, 708–731, 732–754, 756–777, 778–800, 802–823, 824–848, 945–968, 979–1002, and 1004–1027; these read FKRL…ICEQ, SLRV…MRKL, KHLE…IGEL, HLRI…IREL, QHLH…VGKL, NLKI…IGEL, NHLQ…QISQ, MPNL…INGT, DSRL…EFKF, and AGPA…VFRC.

Belongs to the disease resistance NB-LRR family. As to quaternary structure, interacts with AVR-Pik through its N-terminal part containing the HMA-like domain.

Its function is as follows. Disease resistance (R) protein that specifically recognizes the AVR-Pik effector avirulence protein from M.oryzae. Resistance proteins guard the plant against pathogens that contain an appropriate avirulence protein via an indirect interaction with this avirulence protein. That triggers a defense system including the hypersensitive response, which restricts the pathogen growth. Contribution of Pik-2 is required to recognize the effector avirulence protein AVR-Pik. The protein is Disease resistance protein Pik-1 of Oryza sativa subsp. japonica (Rice).